A 418-amino-acid polypeptide reads, in one-letter code: Glutamyl-tRNA reductase (418 aa).

Residues 49 to 52 (TCNR), S107, 112 to 114 (EPQ), and Q118 each bind substrate. C50 acts as the Nucleophile in catalysis. 187-192 (GAGETI) contacts NADP(+).

This sequence belongs to the glutamyl-tRNA reductase family. As to quaternary structure, homodimer.

The catalysed reaction is (S)-4-amino-5-oxopentanoate + tRNA(Glu) + NADP(+) = L-glutamyl-tRNA(Glu) + NADPH + H(+). It functions in the pathway porphyrin-containing compound metabolism; protoporphyrin-IX biosynthesis; 5-aminolevulinate from L-glutamyl-tRNA(Glu): step 1/2. Its function is as follows. Catalyzes the NADPH-dependent reduction of glutamyl-tRNA(Glu) to glutamate 1-semialdehyde (GSA). This chain is Glutamyl-tRNA reductase, found in Vibrio campbellii (strain ATCC BAA-1116).